Reading from the N-terminus, the 510-residue chain is MEFSTKALDWSKAGQNGFLATKTDCLVVGVFEGQNLAGVAKALDVATKGLVARLLKQGDFEGKRGTQLTLHEVAGVGAARVLLVGLGKEADFNDKAFAEAVRTAVRALSSTRATSALWCLSQQPPQQRDIGWAVITTISLVRDAGYRLLERHPGLKRANGKPGAADKATLRKVVLAVDANDAKAATQAVVRGTAIANGMELTRDLGNLPSNICTPTYLANTARAIAKRHKLKVEVLGRKQIEALNMGSFLAVTKGSVEPPQFIVLRYDGAGAKQAPVVLVGKGITFDTGGISLKPGEGMDEMKYDMCGAASVLGTLQAVAEMGLKLNVIAVVPTCENMPSGVATKPGDVVTSMSGQTIEILNTDAEGRLILCDALTYVERFKPAAVVDVATLTGACIIALGHINTGLYARSDMLADQLLQAGRKSMDTAWRMPLDDEYQDQLKSNFADMANIGGRPAGSVTAACFLARFTEKYDWAHLDIAGTAWKSGAAKGATGRPVPLLTQFLMDRAA.

Mn(2+) contacts are provided by Lys282 and Asp287. Lys294 is an active-site residue. 3 residues coordinate Mn(2+): Asp305, Asp364, and Glu366. Residue Arg368 is part of the active site.

Belongs to the peptidase M17 family. Requires Mn(2+) as cofactor.

The protein resides in the cytoplasm. It carries out the reaction Release of an N-terminal amino acid, Xaa-|-Yaa-, in which Xaa is preferably Leu, but may be other amino acids including Pro although not Arg or Lys, and Yaa may be Pro. Amino acid amides and methyl esters are also readily hydrolyzed, but rates on arylamides are exceedingly low.. The enzyme catalyses Release of an N-terminal amino acid, preferentially leucine, but not glutamic or aspartic acids.. Functionally, presumably involved in the processing and regular turnover of intracellular proteins. Catalyzes the removal of unsubstituted N-terminal amino acids from various peptides. The protein is Probable cytosol aminopeptidase of Cupriavidus pinatubonensis (strain JMP 134 / LMG 1197) (Cupriavidus necator (strain JMP 134)).